The sequence spans 108 residues: MKNTTTPTLQGYDIREYLGIVTGEAILGANIFKDLFAGIRDFVGGRSNAYEKELIKARKIAFNEMNSTAESLGANAVVGINIDYEVVGTSNSMLMVSIYGTAVKIFSL.

This sequence belongs to the UPF0145 family.

The sequence is that of UPF0145 protein HDEF_1024 from Hamiltonella defensa subsp. Acyrthosiphon pisum (strain 5AT).